The following is a 1113-amino-acid chain: Potassium channel subfamily U member 1 (1113 aa).

At 1–24 (MSQTLLDNLNKKELTETSCTIEIQ) the chain is on the extracellular side. Residues 25–45 (AAFILSSLATFFGGLIVLFIF) traverse the membrane as a helical segment. The Cytoplasmic portion of the chain corresponds to 46-101 (RIALKISRNWKTVKGPRGILELFSSRRIEVNPLRKLYFHGVFRERIEMLLSAQTIV). Residues 102–122 (GQVLVILVFVLSIGSLVIYFI) form a helical membrane-spanning segment. The Extracellular portion of the chain corresponds to 123–137 (NSMDPVRKCSSYEDK). Residues 138–158 (IVHVDLSFNAFFSFYFGLRFW) form a helical membrane-spanning segment. Topologically, residues 159–165 (AAEDKIK) are cytoplasmic. A helical membrane pass occupies residues 166-186 (FWLEMNSIVDIFTIPPTFISY). Over 187–188 (YL) the chain is Extracellular. Residues 189-209 (KSNWLGLRFLRALRLLELPKI) traverse the membrane as a helical; Voltage-sensor segment. At 210-226 (LQILQVIKTSNSVKLSK) the chain is on the cytoplasmic side. The helical transmembrane segment at 227–247 (LMSIVISTWFTAAGFLHLVEN) threads the bilayer. At 248 to 259 (SGDPWLNGRNSQ) the chain is on the extracellular side. Residues 260 to 282 (TMSYFESIYLVTATMSTVGFGDV) constitute an intramembrane region (pore-forming). Residues 283–290 (VAKTSLGR) are Extracellular-facing. A helical membrane pass occupies residues 291 to 311 (IFIVFFTLGSLILFANYIPEM). Over 312–1113 (VELFSTRKKY…FDASDIDPGK (802 aa)) the chain is Cytoplasmic. RCK N-terminal domains are found at residues 331-473 (KKFI…DNII) and 710-881 (QNHI…DEAI). The segment covering 1047 to 1081 (ASIQDQDTTTNVTSMSQGSNFQGAQSALNEHSLSP) has biased composition (polar residues). The interval 1047 to 1091 (ASIQDQDTTTNVTSMSQGSNFQGAQSALNEHSLSPASAMGEKKSP) is disordered.

It belongs to the potassium channel family. Calcium-activated (TC 1.A.1.3) subfamily. KCa1.1/KCNMA1 sub-subfamily. Homotetramer; which constitutes the activated potassium channel. Interacts with LRRC52; this interaction changes channel gating properties, such as shifting gating to more negative potentials at a given pH.

It is found in the cell membrane. It localises to the cell projection. The protein resides in the cilium. Its subcellular location is the flagellum membrane. It carries out the reaction K(+)(in) = K(+)(out). Its activity is regulated as follows. Regulated by changes in cytosolic pH; activated by alkalization. Not activated by intracellular Ca(2+). VU0546110 acts as a selective inhibitor. The auxiliary subunit LRRC52 shifts the activation of KCNU1 to more negative potentials at a given pH. Testis-specific potassium channel activated by both intracellular pH and membrane voltage that mediates export of K(+). Represents the primary spermatozoan K(+) current. The channel underlies a pH-triggered membrane hyperpolarization during the process of sperm capacitation, as sperm encounter the alkaline environment near the ovum in the female reproductive tract, thereby playing an essential for male fertility. In Rattus norvegicus (Rat), this protein is Potassium channel subfamily U member 1 (Kcnu1).